Here is a 682-residue protein sequence, read N- to C-terminus: Guanylate cyclase soluble subunit beta-2 (682 aa).

Position 43 (His-43) interacts with heme. The region spanning 408–536 (TILFSDVVTF…DTVNTASRME (129 aa)) is the Guanylate cyclase domain. Residues 592 to 667 (MGRPSAPADG…QPSPDETKTS (76 aa)) form a disordered region. Over residues 649–667 (RNSTDAVNNQPSPDETKTS) the composition is skewed to polar residues.

Belongs to the adenylyl cyclase class-4/guanylyl cyclase family. In terms of assembly, heterodimer of an alpha and a beta chain. The cofactor is heme. Kidney and liver.

Its subcellular location is the cytoplasm. It catalyses the reaction GTP = 3',5'-cyclic GMP + diphosphate. Its activity is regulated as follows. Activated by nitric oxide in the presence of magnesium or manganese ions. The chain is Guanylate cyclase soluble subunit beta-2 (Gucy1b2) from Rattus norvegicus (Rat).